The following is a 130-amino-acid chain: Transcription antitermination protein NusB (130 aa).

This sequence belongs to the NusB family.

Its function is as follows. Involved in transcription antitermination. Required for transcription of ribosomal RNA (rRNA) genes. Binds specifically to the boxA antiterminator sequence of the ribosomal RNA (rrn) operons. In Geobacillus kaustophilus (strain HTA426), this protein is Transcription antitermination protein NusB.